The primary structure comprises 196 residues: Pyridoxal 5'-phosphate synthase subunit PdxT (196 aa).

Position 46-48 (46-48) interacts with L-glutamine; the sequence is GES. C78 functions as the Nucleophile in the catalytic mechanism. Residues R105 and 133–134 contribute to the L-glutamine site; that span reads IR. Residues H169 and E171 each act as charge relay system in the active site.

It belongs to the glutaminase PdxT/SNO family. In terms of assembly, in the presence of PdxS, forms a dodecamer of heterodimers. Only shows activity in the heterodimer.

The enzyme catalyses aldehydo-D-ribose 5-phosphate + D-glyceraldehyde 3-phosphate + L-glutamine = pyridoxal 5'-phosphate + L-glutamate + phosphate + 3 H2O + H(+). It catalyses the reaction L-glutamine + H2O = L-glutamate + NH4(+). Its pathway is cofactor biosynthesis; pyridoxal 5'-phosphate biosynthesis. Functionally, catalyzes the hydrolysis of glutamine to glutamate and ammonia as part of the biosynthesis of pyridoxal 5'-phosphate. The resulting ammonia molecule is channeled to the active site of PdxS. The chain is Pyridoxal 5'-phosphate synthase subunit PdxT from Geobacillus kaustophilus (strain HTA426).